Here is a 217-residue protein sequence, read N- to C-terminus: MTNTEIFEKLTNAIVTQNIAGCVQLTQEALDAGIPPIDIITKGLSPGMKIIGDKFEAAEIFLPQIMMSAKAMSSAMEILTPELEKSKVEGEETGLAITFVAEGDIHDIGHRLVTTMLGANGFEILDLGVDVLNENVVEEAAKHKGQKVILVGSALMTTSMLGQKDLMDRLREEKLRDSLKCMFGGAPVSSKWIEEIGADATAENAAEAAKVALNIMK.

The B12-binding N-terminal domain occupies 1 to 91 (MTNTEIFEKL…ELEKSKVEGE (91 aa)). The B12-binding domain occupies 93 to 217 (TGLAITFVAE…AAKVALNIMK (125 aa)). Residue H106 participates in methylcob(III)alamin binding.

It belongs to the methylamine corrinoid protein family. As to quaternary structure, can form a complex with MtmB.

Its pathway is one-carbon metabolism; methanogenesis from methylamine. Acts as a methyl group carrier between MtmB and MtbA. This is Monomethylamine corrinoid protein 2 (mtmC2) from Methanosarcina acetivorans (strain ATCC 35395 / DSM 2834 / JCM 12185 / C2A).